Reading from the N-terminus, the 194-residue chain is Troponin I 4 (194 aa).

The tract at residues 1 to 27 (MSDVDADEARKMAERERKKEEVRKRLE) is disordered. A compositionally biased stretch (basic and acidic residues) spans 7-27 (DEARKMAERERKKEEVRKRLE).

The protein belongs to the troponin I family. As to expression, expression is detected only in pharyngeal muscle cells from embryos to adults.

Functionally, troponin I is the inhibitory subunit of troponin, the thin filament regulatory complex which confers calcium-sensitivity to muscle actomyosin ATPase activity. This chain is Troponin I 4 (tni-4), found in Caenorhabditis elegans.